Here is a 591-residue protein sequence, read N- to C-terminus: Aspartate--tRNA ligase (591 aa).

Glutamate 173 provides a ligand contact to L-aspartate. The segment at 197–200 is aspartate; the sequence is QLFK. L-aspartate is bound at residue arginine 219. Residues 219–221 and glutamine 228 contribute to the ATP site; that span reads RDE. Histidine 446 provides a ligand contact to L-aspartate. Glutamate 482 is a binding site for ATP. Position 489 (arginine 489) interacts with L-aspartate. Position 534 to 537 (534 to 537) interacts with ATP; sequence GLDR.

It belongs to the class-II aminoacyl-tRNA synthetase family. Type 1 subfamily. Homodimer.

Its subcellular location is the cytoplasm. The enzyme catalyses tRNA(Asp) + L-aspartate + ATP = L-aspartyl-tRNA(Asp) + AMP + diphosphate. Its function is as follows. Catalyzes the attachment of L-aspartate to tRNA(Asp) in a two-step reaction: L-aspartate is first activated by ATP to form Asp-AMP and then transferred to the acceptor end of tRNA(Asp). This chain is Aspartate--tRNA ligase, found in Limosilactobacillus fermentum (strain NBRC 3956 / LMG 18251) (Lactobacillus fermentum).